A 230-amino-acid chain; its full sequence is Ribonuclease HII (230 aa).

Positions 21–212 (GPVAGVDEVG…VRRVANGSGG (192 aa)) constitute an RNase H type-2 domain. A divalent metal cation contacts are provided by aspartate 27, glutamate 28, and aspartate 121.

This sequence belongs to the RNase HII family. Mn(2+) serves as cofactor. It depends on Mg(2+) as a cofactor.

The protein localises to the cytoplasm. The catalysed reaction is Endonucleolytic cleavage to 5'-phosphomonoester.. Its function is as follows. Endonuclease that specifically degrades the RNA of RNA-DNA hybrids. This chain is Ribonuclease HII, found in Mycobacterium avium (strain 104).